Reading from the N-terminus, the 446-residue chain is Probable glycine dehydrogenase (decarboxylating) subunit 1 (446 aa).

The protein belongs to the GcvP family. N-terminal subunit subfamily. As to quaternary structure, the glycine cleavage system is composed of four proteins: P, T, L and H. In this organism, the P 'protein' is a heterodimer of two subunits.

It carries out the reaction N(6)-[(R)-lipoyl]-L-lysyl-[glycine-cleavage complex H protein] + glycine + H(+) = N(6)-[(R)-S(8)-aminomethyldihydrolipoyl]-L-lysyl-[glycine-cleavage complex H protein] + CO2. The glycine cleavage system catalyzes the degradation of glycine. The P protein binds the alpha-amino group of glycine through its pyridoxal phosphate cofactor; CO(2) is released and the remaining methylamine moiety is then transferred to the lipoamide cofactor of the H protein. This chain is Probable glycine dehydrogenase (decarboxylating) subunit 1, found in Methylocella silvestris (strain DSM 15510 / CIP 108128 / LMG 27833 / NCIMB 13906 / BL2).